Consider the following 365-residue polypeptide: UDP-N-acetylglucosamine--N-acetylmuramyl-(pentapeptide) pyrophosphoryl-undecaprenol N-acetylglucosamine transferase (365 aa).

UDP-N-acetyl-alpha-D-glucosamine-binding positions include 11–13, N124, R165, S192, I246, and Q291; that span reads TGG.

It belongs to the glycosyltransferase 28 family. MurG subfamily.

It is found in the cell inner membrane. The enzyme catalyses di-trans,octa-cis-undecaprenyl diphospho-N-acetyl-alpha-D-muramoyl-L-alanyl-D-glutamyl-meso-2,6-diaminopimeloyl-D-alanyl-D-alanine + UDP-N-acetyl-alpha-D-glucosamine = di-trans,octa-cis-undecaprenyl diphospho-[N-acetyl-alpha-D-glucosaminyl-(1-&gt;4)]-N-acetyl-alpha-D-muramoyl-L-alanyl-D-glutamyl-meso-2,6-diaminopimeloyl-D-alanyl-D-alanine + UDP + H(+). The protein operates within cell wall biogenesis; peptidoglycan biosynthesis. In terms of biological role, cell wall formation. Catalyzes the transfer of a GlcNAc subunit on undecaprenyl-pyrophosphoryl-MurNAc-pentapeptide (lipid intermediate I) to form undecaprenyl-pyrophosphoryl-MurNAc-(pentapeptide)GlcNAc (lipid intermediate II). This Nitratidesulfovibrio vulgaris (strain DP4) (Desulfovibrio vulgaris) protein is UDP-N-acetylglucosamine--N-acetylmuramyl-(pentapeptide) pyrophosphoryl-undecaprenol N-acetylglucosamine transferase.